Reading from the N-terminus, the 173-residue chain is Co-chaperone protein HscB homolog (173 aa).

The 73-residue stretch at 5–77 (CHFAQFDLQP…PRRALYLLTL (73 aa)) folds into the J domain.

This sequence belongs to the HscB family. As to quaternary structure, interacts with HscA and stimulates its ATPase activity.

In terms of biological role, co-chaperone involved in the maturation of iron-sulfur cluster-containing proteins. Seems to help targeting proteins to be folded toward HscA. The sequence is that of Co-chaperone protein HscB homolog from Pseudomonas aeruginosa (strain UCBPP-PA14).